Reading from the N-terminus, the 309-residue chain is MTLITICGPTATGKSGLALDLAHRLGSIILSADSRQIYKYFNIGTAKPTIKEQQLVSHYLIDICEPTEILTLAEYQKQAQSFIQSPGSQTDVVLPTLLVGGTGLYIKAIVKGLKIPRVGPNEKLRSQLANLGQKQCYKMLQQVDQVAVEKIHPNDVVRTLRALEVFYVSGKPISQQQGEDLPNYPILQIGLDCDVEVLGERIRDRTEKMVEVGLVEEVKCLCEKYGEKLPLLNTLGYAEMKQYLAGDISLAEAIKATVLHTRQFAKRQRTWFRGYPEIEWFDGNAPNLLDKVWERVREFTRILAEKTQE.

8–15 (GPTATGKS) contacts ATP. 10 to 15 (TATGKS) is a substrate binding site. The interaction with substrate tRNA stretch occupies residues 33–36 (DSRQ).

It belongs to the IPP transferase family. Monomer. It depends on Mg(2+) as a cofactor.

The catalysed reaction is adenosine(37) in tRNA + dimethylallyl diphosphate = N(6)-dimethylallyladenosine(37) in tRNA + diphosphate. Its function is as follows. Catalyzes the transfer of a dimethylallyl group onto the adenine at position 37 in tRNAs that read codons beginning with uridine, leading to the formation of N6-(dimethylallyl)adenosine (i(6)A). The polypeptide is tRNA dimethylallyltransferase (Trichodesmium erythraeum (strain IMS101)).